A 130-amino-acid chain; its full sequence is Small ribosomal subunit protein uS9 (130 aa).

This sequence belongs to the universal ribosomal protein uS9 family.

The polypeptide is Small ribosomal subunit protein uS9 (Pseudomonas paraeruginosa (strain DSM 24068 / PA7) (Pseudomonas aeruginosa (strain PA7))).